A 136-amino-acid chain; its full sequence is Large ribosomal subunit protein eL27 (136 aa).

The region spanning 5 to 40 is the KOW domain; it reads MKPGKVVMVLAGRYAGRKAVIVKNIDDGTADRPYSH.

Belongs to the eukaryotic ribosomal protein eL27 family. Component of the large ribosomal subunit.

It is found in the cytoplasm. It localises to the cytosol. The protein resides in the rough endoplasmic reticulum. Functionally, component of the large ribosomal subunit. This Hippocampus comes (Tiger tail seahorse) protein is Large ribosomal subunit protein eL27 (rpl27).